Here is a 638-residue protein sequence, read N- to C-terminus: Threonine--tRNA ligase (638 aa).

The region spanning 1–61 (MPNITLPDGS…EADTPLAIVT (61 aa)) is the TGS domain. Residues 242–533 (DHRKLGRLLD…LIEHYAGALP (292 aa)) are catalytic. Zn(2+) is bound by residues cysteine 333, histidine 384, and histidine 510.

The protein belongs to the class-II aminoacyl-tRNA synthetase family. Homodimer. It depends on Zn(2+) as a cofactor.

It is found in the cytoplasm. The catalysed reaction is tRNA(Thr) + L-threonine + ATP = L-threonyl-tRNA(Thr) + AMP + diphosphate + H(+). Its function is as follows. Catalyzes the attachment of threonine to tRNA(Thr) in a two-step reaction: L-threonine is first activated by ATP to form Thr-AMP and then transferred to the acceptor end of tRNA(Thr). Also edits incorrectly charged L-seryl-tRNA(Thr). The polypeptide is Threonine--tRNA ligase (Aromatoleum aromaticum (strain DSM 19018 / LMG 30748 / EbN1) (Azoarcus sp. (strain EbN1))).